The chain runs to 43 residues: uncharacterized protein (43 aa).

The segment at M1–N43 is disordered. A compositionally biased stretch (acidic residues) spans E20 to Q35.

This is an uncharacterized protein from Dictyostelium discoideum (Social amoeba).